The chain runs to 59 residues: Lantibiotic lacticin 3147 A1 (59 aa).

Residues 1-29 (MNKNEIETQPVTWLEEVSDQNFDEDVFGA) constitute a propeptide that is removed on maturation. Residues 30–31 (CS) constitute a cross-link (lanthionine (Cys-Ser)). Residues T32 and T34 each carry the 2,3-didehydrobutyrine modification. At S36 the chain carries 2,3-didehydroalanine (Ser). The lanthionine (Ser-Cys) cross-link spans 38-48 (SDYWGNNGAWC). 2 consecutive cross-links (beta-methyllanthionine (Thr-Cys)) follow at residues 49 to 54 (TLTHEC) and 51 to 58 (THECMAWC).

Post-translationally, maturation of lantibiotics involves the enzymatic conversion of Thr, and Ser into dehydrated AA and the formation of thioether bonds with cysteine. This is followed by membrane translocation and cleavage of the modified precursor. In terms of processing, it is not established whether the 2,3-didehydrobutyrines are the E- or Z-isomers. In the NMR model they were assumed to be the Z-isomer.

The protein localises to the secreted. Lanthionine-containing peptide antibiotic (lantibiotic) active on Gram-positive bacteria. The bactericidal activity of lantibiotics is based on depolarization of energized bacterial cytoplasmic membranes, initiated by the formation of aqueous transmembrane pores. When present individually lacticin 3147 A1 exhibits strong activity towards L.lactis strain AM2, weak activity towards L.lactis strain HP and no activity towards L.lactis strain IFPL359, but when combined with lacticin 3147 A2 it displays strong activity towards all three strains. In Lactococcus lactis subsp. lactis (Streptococcus lactis), this protein is Lantibiotic lacticin 3147 A1.